A 1102-amino-acid polypeptide reads, in one-letter code: Trafficking protein particle complex II-specific subunit 130 (1102 aa).

This sequence belongs to the TMEM1 family. Part of the multisubunit TRAPP (transport protein particle) II complex composed of BET3, BET5, TRS20, TRS23, TRS31, TRS33, TRS65, TRS120 and TRS130. Interacts with YPT31 and YPT32.

It is found in the golgi apparatus. Specific subunit of the TRAPP II complex, a highly conserved vesicle tethering complex that functions in the late Golgi as a guanine nucleotide exchange factor (GEF) for the Golgi YPT1 GTPase. TRS130 plays a role in the YPT GEF activity of TRAPP II in concert with the two other TRAPP II-specific subunits TRS65 and TRS120. Required for both the cytoplasm-to-vacuole targeting (Cvt) pathway and starvation-induced autophagy through its role in ATG8 and ATG9 trafficking. This chain is Trafficking protein particle complex II-specific subunit 130 (TRS130), found in Saccharomyces cerevisiae (strain ATCC 204508 / S288c) (Baker's yeast).